A 227-amino-acid polypeptide reads, in one-letter code: Gamma-glutamyl-hercynylcysteine sulfoxide hydrolase (227 aa).

Cysteine 2 (nucleophile) is an active-site residue. The Glutamine amidotransferase type-2 domain maps to 2–227 (CRHVAWLGAP…RDAHVVVTPL (226 aa)).

It catalyses the reaction gamma-L-glutamyl-hercynylcysteine S-oxide + H2O = S-(hercyn-2-yl)-L-cysteine S-oxide + L-glutamate. The protein operates within amino-acid biosynthesis; ergothioneine biosynthesis. Its function is as follows. Catalyzes the hydrolysis of the gamma-glutamyl amide bond of hercynyl-gamma-L-glutamyl-L-cysteine sulfoxide to produce hercynylcysteine sulfoxide, a step in the biosynthesis pathway of ergothioneine. The sequence is that of Gamma-glutamyl-hercynylcysteine sulfoxide hydrolase from Mycolicibacterium smegmatis (strain ATCC 700084 / mc(2)155) (Mycobacterium smegmatis).